Reading from the N-terminus, the 63-residue chain is Large ribosomal subunit protein uL30 (63 aa).

Belongs to the universal ribosomal protein uL30 family. In terms of assembly, part of the 50S ribosomal subunit.

This is Large ribosomal subunit protein uL30 from Rickettsia typhi (strain ATCC VR-144 / Wilmington).